The chain runs to 767 residues: 5-methyltetrahydropteroyltriglutamate--homocysteine methyltransferase (767 aa).

Residues 17 to 20 and lysine 117 contribute to the 5-methyltetrahydropteroyltri-L-glutamate site; that span reads RELK. Residues 442 to 444 and glutamate 495 each bind L-homocysteine; that span reads IGS. Residues 442-444 and glutamate 495 contribute to the L-methionine site; that span reads IGS. 5-methyltetrahydropteroyltri-L-glutamate is bound by residues 526–527 and tryptophan 572; that span reads RC. Aspartate 610 lines the L-homocysteine pocket. Aspartate 610 serves as a coordination point for L-methionine. Residue glutamate 616 participates in 5-methyltetrahydropteroyltri-L-glutamate binding. 3 residues coordinate Zn(2+): histidine 653, cysteine 655, and glutamate 677. The active-site Proton donor is histidine 706. Zn(2+) is bound at residue cysteine 738.

The protein belongs to the vitamin-B12 independent methionine synthase family. Zn(2+) serves as cofactor.

The catalysed reaction is 5-methyltetrahydropteroyltri-L-glutamate + L-homocysteine = tetrahydropteroyltri-L-glutamate + L-methionine. It participates in amino-acid biosynthesis; L-methionine biosynthesis via de novo pathway; L-methionine from L-homocysteine (MetE route): step 1/1. Functionally, catalyzes the transfer of a methyl group from 5-methyltetrahydrofolate to homocysteine resulting in methionine formation. The sequence is that of 5-methyltetrahydropteroyltriglutamate--homocysteine methyltransferase from Bifidobacterium animalis subsp. lactis (strain AD011).